The primary structure comprises 308 residues: Oligopeptide transport system permease protein AmiD (308 aa).

6 helical membrane-spanning segments follow: residues 43–63, 111–131, 145–167, 171–193, 234–254, and 274–294; these read TVVM…YPMF, ILIS…VGGI, VYNV…SIGA, NLIF…VQIL, MLPS…GLPI, and AYLF…LFVV. Positions 107–295 constitute an ABC transmembrane type-1 domain; sequence ARNSILISVI…LVSLSLFVVG (189 aa).

It belongs to the binding-protein-dependent transport system permease family. OppBC subfamily.

The protein resides in the cell membrane. In terms of biological role, part of the binding-protein-dependent transport system for oligopeptides; probably responsible for the translocation of the substrate across the membrane. The polypeptide is Oligopeptide transport system permease protein AmiD (amiD) (Streptococcus pneumoniae (strain ATCC BAA-255 / R6)).